The primary structure comprises 176 residues: Transcription termination/antitermination protein NusG (176 aa).

A KOW domain is found at 125–149 (GEVVRVVEGPFANFTATVEEYDVEH).

It belongs to the NusG family.

Its function is as follows. Participates in transcription elongation, termination and antitermination. The protein is Transcription termination/antitermination protein NusG of Helicobacter pylori (strain ATCC 700392 / 26695) (Campylobacter pylori).